Here is a 129-residue protein sequence, read N- to C-terminus: Lysozyme C (129 aa).

The region spanning 1 to 129 (KVYGRCELAA…VSVWTRGCRL (129 aa)) is the C-type lysozyme domain. 4 cysteine pairs are disulfide-bonded: C6-C127, C30-C115, C64-C80, and C76-C94. Residues E35 and D52 contribute to the active site.

This sequence belongs to the glycosyl hydrolase 22 family. In terms of assembly, monomer.

Its subcellular location is the secreted. It carries out the reaction Hydrolysis of (1-&gt;4)-beta-linkages between N-acetylmuramic acid and N-acetyl-D-glucosamine residues in a peptidoglycan and between N-acetyl-D-glucosamine residues in chitodextrins.. Lysozymes have primarily a bacteriolytic function; those in tissues and body fluids are associated with the monocyte-macrophage system and enhance the activity of immunoagents. In Lophura leucomelanos (Kalij pheasant), this protein is Lysozyme C (LYZ).